Reading from the N-terminus, the 386-residue chain is Antilisterial bacteriocin subtilosin biosynthesis protein AlbE (386 aa).

Its function is as follows. Involved in the production of the bacteriocin subtilosin. This Bacillus subtilis (strain 168) protein is Antilisterial bacteriocin subtilosin biosynthesis protein AlbE (albE).